We begin with the raw amino-acid sequence, 356 residues long: Chorismate synthase (356 aa).

Arginine 44 provides a ligand contact to NADP(+). FMN-binding positions include 121-123 (HFS), glycine 278, 293-297 (KPTPS), and arginine 320.

It belongs to the chorismate synthase family. FMNH2 is required as a cofactor.

It catalyses the reaction 5-O-(1-carboxyvinyl)-3-phosphoshikimate = chorismate + phosphate. It functions in the pathway metabolic intermediate biosynthesis; chorismate biosynthesis; chorismate from D-erythrose 4-phosphate and phosphoenolpyruvate: step 7/7. Functionally, catalyzes the anti-1,4-elimination of the C-3 phosphate and the C-6 proR hydrogen from 5-enolpyruvylshikimate-3-phosphate (EPSP) to yield chorismate, which is the branch point compound that serves as the starting substrate for the three terminal pathways of aromatic amino acid biosynthesis. This reaction introduces a second double bond into the aromatic ring system. The sequence is that of Chorismate synthase from Pyrococcus abyssi (strain GE5 / Orsay).